A 1126-amino-acid chain; its full sequence is Replication protein 1a (1126 aa).

The segment at 69-406 is methyltransferase; that stretch reads SFSLDATQQN…HTIIGGVTLI (338 aa). The Alphavirus-like MT domain occupies 90–278; sequence VFSNSSSSSH…HRFSLLKHYL (189 aa). Residues 806-963 form the (+)RNA virus helicase ATP-binding domain; that stretch reads DQSCVFASAE…HKLTGKVERK (158 aa). Positions 834–1094 are ATP-dependent helicase; that stretch reads TIVDGVAGCG…RHKKTFKYFT (261 aa). Position 838–845 (838–845) interacts with ATP; it reads GVAGCGKT. Positions 964 to 1125 constitute a (+)RNA virus helicase C-terminal domain; sequence LITWRSPADA…SILARSYNHN (162 aa).

The protein belongs to the bromoviridae replication protein 1a family. Interacts with RNA-directed RNA polymerase 2a.

The protein resides in the host endoplasmic reticulum membrane. Involved in the virus replication. Contains a helicase domain and a methyltransferase domain. The methyltransferase domain is probably involved in viral RNA capping. Involved in the formation of ER membrane spherular invaginations in which RNA replication complexes form. The protein is Replication protein 1a of Alfalfa mosaic virus (AMV).